Reading from the N-terminus, the 333-residue chain is Ornithine carbamoyltransferase (333 aa).

Residues 56–59 (STRT), glutamine 83, arginine 107, and 134–137 (HPTQ) each bind carbamoyl phosphate. L-ornithine-binding positions include asparagine 167, aspartate 231, and 235–236 (SM). Residues 273-274 (CL) and arginine 318 each bind carbamoyl phosphate.

It belongs to the aspartate/ornithine carbamoyltransferase superfamily. OTCase family.

The protein resides in the cytoplasm. The enzyme catalyses carbamoyl phosphate + L-ornithine = L-citrulline + phosphate + H(+). The protein operates within amino-acid biosynthesis; L-arginine biosynthesis; L-arginine from L-ornithine and carbamoyl phosphate: step 1/3. Reversibly catalyzes the transfer of the carbamoyl group from carbamoyl phosphate (CP) to the N(epsilon) atom of ornithine (ORN) to produce L-citrulline. This Staphylococcus aureus (strain MSSA476) protein is Ornithine carbamoyltransferase.